Consider the following 388-residue polypeptide: Processive diacylglycerol beta-glucosyltransferase (388 aa).

The protein belongs to the glycosyltransferase 28 family. UgtP subfamily.

Its subcellular location is the cell membrane. It carries out the reaction a 1,2-diacyl-3-O-(beta-D-glucopyranosyl)-sn-glycerol + UDP-alpha-D-glucose = a 1,2-diacyl-3-O-(beta-D-Glc-(1-&gt;6)-beta-D-Glc)-sn-glycerol + UDP + H(+). It catalyses the reaction a 1,2-diacyl-3-O-(beta-D-Glc-(1-&gt;6)-beta-D-Glc)-sn-glycerol + UDP-alpha-D-glucose = a 1,2-diacyl-3-O-(beta-D-Glc-(1-&gt;6)-beta-D-Glc-(1-&gt;6)-beta-D-Glc)-sn-glycerol + UDP + H(+). The catalysed reaction is a 1,2-diacyl-sn-glycerol + UDP-alpha-D-glucose = a 1,2-diacyl-3-O-(beta-D-glucopyranosyl)-sn-glycerol + UDP + H(+). The protein operates within glycolipid metabolism; diglucosyl-diacylglycerol biosynthesis. In terms of biological role, processive glucosyltransferase involved in the biosynthesis of both the bilayer- and non-bilayer-forming membrane glucolipids. Is able to successively transfer up to three glucosyl residues to diacylglycerol (DAG), thereby catalyzing the formation of beta-monoglucosyl-DAG (3-O-(beta-D-glucopyranosyl)-1,2-diacyl-sn-glycerol), beta-diglucosyl-DAG (3-O-(beta-D-glucopyranosyl-beta-(1-&gt;6)-D-glucopyranosyl)-1,2-diacyl-sn-glycerol) and beta-triglucosyl-DAG (3-O-(beta-D-glucopyranosyl-beta-(1-&gt;6)-D-glucopyranosyl-beta-(1-&gt;6)-D-glucopyranosyl)-1,2-diacyl-sn-glycerol). Beta-diglucosyl-DAG is the predominant glycolipid found in Bacillales and is also used as a membrane anchor for lipoteichoic acid (LTA). This is Processive diacylglycerol beta-glucosyltransferase from Bacillus cereus (strain AH187).